We begin with the raw amino-acid sequence, 342 residues long: Protein-ribulosamine 3-kinase, chloroplastic (342 aa).

A chloroplast-targeting transit peptide spans 1 to 46 (MANVALLSAASPSTSSAAPRLRHVARRRPSRRSACPRSAASRLSIM). ATP is bound at residue 141 to 143 (EFI). The active-site Proton acceptor is aspartate 246.

This sequence belongs to the fructosamine kinase family.

Its subcellular location is the plastid. It is found in the chloroplast. It carries out the reaction N(6)-D-ribulosyl-L-lysyl-[protein] + ATP = N(6)-(3-O-phospho-D-ribulosyl)-L-lysyl-[protein] + ADP + H(+). The enzyme catalyses N(6)-(D-erythrulosyl)-L-lysyl-[protein] + ATP = N(6)-(3-O-phospho-D-erythrulosyl)-L-lysyl-[protein] + ADP + H(+). Initiates a process leading to the deglycation of proteins. Phosphorylates low-molecular-mass and protein-bound erythrulosamines and ribulosamines, but not fructosamines or psicosamines, on the third carbon of the sugar moiety. Protein-bound erythrulosamine 3-phosphates and ribulosamine 3-phosphates are unstable and decompose under physiological conditions. This Oryza sativa subsp. japonica (Rice) protein is Protein-ribulosamine 3-kinase, chloroplastic.